The sequence spans 1153 residues: Probable RNA-dependent RNA polymerase 3 (1153 aa).

The protein belongs to the RdRP family. As to expression, expressed in shoot apical meristem (SAM) and panicles.

It carries out the reaction RNA(n) + a ribonucleoside 5'-triphosphate = RNA(n+1) + diphosphate. Probably involved in the RNA silencing pathway and required for the generation of small interfering RNAs (siRNAs). In Oryza sativa subsp. japonica (Rice), this protein is Probable RNA-dependent RNA polymerase 3 (RDR3).